We begin with the raw amino-acid sequence, 467 residues long: ATP-dependent protease ATPase subunit HslU (467 aa).

ATP contacts are provided by residues Ile-18, 60 to 65 (GVGKTE), Asp-280, Glu-345, and Arg-417.

It belongs to the ClpX chaperone family. HslU subfamily. In terms of assembly, a double ring-shaped homohexamer of HslV is capped on each side by a ring-shaped HslU homohexamer. The assembly of the HslU/HslV complex is dependent on binding of ATP.

It is found in the cytoplasm. In terms of biological role, ATPase subunit of a proteasome-like degradation complex; this subunit has chaperone activity. The binding of ATP and its subsequent hydrolysis by HslU are essential for unfolding of protein substrates subsequently hydrolyzed by HslV. HslU recognizes the N-terminal part of its protein substrates and unfolds these before they are guided to HslV for hydrolysis. This is ATP-dependent protease ATPase subunit HslU from Lactobacillus helveticus (strain DPC 4571).